A 310-amino-acid chain; its full sequence is D-alanine--D-alanine ligase (310 aa).

Residues 105–301 (KQAFVSAGIL…FEELVERIIL (197 aa)) enclose the ATP-grasp domain. Position 133-186 (133-186 (SFGLPLVVKPVQEGSSVGISIVKEESQLAAAVKLAFRHDDEILVEQFIKGQEVQ)) interacts with ATP. Mg(2+) is bound by residues D254, E267, and N269.

The protein belongs to the D-alanine--D-alanine ligase family. It depends on Mg(2+) as a cofactor. The cofactor is Mn(2+).

It localises to the cytoplasm. It catalyses the reaction 2 D-alanine + ATP = D-alanyl-D-alanine + ADP + phosphate + H(+). Its pathway is cell wall biogenesis; peptidoglycan biosynthesis. Functionally, cell wall formation. The chain is D-alanine--D-alanine ligase from Pelobacter propionicus (strain DSM 2379 / NBRC 103807 / OttBd1).